The sequence spans 236 residues: Probable 2-phosphosulfolactate phosphatase (236 aa).

This sequence belongs to the ComB family. Mg(2+) is required as a cofactor.

The catalysed reaction is (2R)-O-phospho-3-sulfolactate + H2O = (2R)-3-sulfolactate + phosphate. The chain is Probable 2-phosphosulfolactate phosphatase from Gloeobacter violaceus (strain ATCC 29082 / PCC 7421).